Reading from the N-terminus, the 513-residue chain is MHPDLPHSQLKIRRVRLDTGRENVVVISRQSKALRAEIFRGFSRVELRLNGKVLLATLLITDDDTLAAQDEIGLSEPAFRRFAEPVGTLVAVTPATPPESLEAVRAKIRGRTLSQAEIGAIINDLAHYRYSDMEIAAFLIGSASFITSDELLALTGAMAQAGTQLVWPDPVVVDKHCIGGIPGNRTSMVVVPIVAAHGLPIPKTSSRAITSPAGTADTMEVLARVNVGVEEMKAIVSSCNGCLIWGGHVNLSPADDVLISVERPLSLDTREQMVASIMSKKIAAGSTHLLIDIPVGPTAKVTGAVEAMRLRKLFEFVGDRFGRTVEVITTDGRQPIGNGIGPVLEANDVMAVLGNDKDAPRDLREKSLRLAAHLLEYDPKLRGGAGYARARELLDSGAALKQMQKIIDAQGPSTCSTELGSLSFDIKAAHDGTVSAIDCLRLNRLARTAGAPLDKGAGIRLFKKIGDHVEQGEPLYRVYAFDQPEHDLAASAAAAGNGYAVDGHDALPSKTAS.

The protein belongs to the thymidine/pyrimidine-nucleoside phosphorylase family. Type 2 subfamily.

The enzyme catalyses thymidine + phosphate = 2-deoxy-alpha-D-ribose 1-phosphate + thymine. The polypeptide is Putative thymidine phosphorylase (Bradyrhizobium diazoefficiens (strain JCM 10833 / BCRC 13528 / IAM 13628 / NBRC 14792 / USDA 110)).